We begin with the raw amino-acid sequence, 89 residues long: Small ribosomal subunit protein uS14A (89 aa).

The protein belongs to the universal ribosomal protein uS14 family. In terms of assembly, part of the 30S ribosomal subunit. Contacts proteins S3 and S10.

Its function is as follows. Binds 16S rRNA, required for the assembly of 30S particles and may also be responsible for determining the conformation of the 16S rRNA at the A site. This chain is Small ribosomal subunit protein uS14A, found in Ligilactobacillus salivarius (strain UCC118) (Lactobacillus salivarius).